Reading from the N-terminus, the 465-residue chain is 3-isopropylmalate dehydratase large subunit (465 aa).

3 residues coordinate [4Fe-4S] cluster: C347, C407, and C410.

It belongs to the aconitase/IPM isomerase family. LeuC type 1 subfamily. As to quaternary structure, heterodimer of LeuC and LeuD. [4Fe-4S] cluster serves as cofactor.

It carries out the reaction (2R,3S)-3-isopropylmalate = (2S)-2-isopropylmalate. The protein operates within amino-acid biosynthesis; L-leucine biosynthesis; L-leucine from 3-methyl-2-oxobutanoate: step 2/4. Functionally, catalyzes the isomerization between 2-isopropylmalate and 3-isopropylmalate, via the formation of 2-isopropylmaleate. The polypeptide is 3-isopropylmalate dehydratase large subunit (Aeromonas salmonicida (strain A449)).